Here is a 370-residue protein sequence, read N- to C-terminus: Cytochrome b (370 aa).

The next 4 helical transmembrane spans lie at 25–45 (FGSM…FLAI), 69–90 (WIMQ…YTHI), 105–125 (WLSG…GYVL), and 170–190 (FFAL…IHIV). 2 residues coordinate heme b: His-75 and His-89. Residues His-174 and His-188 each coordinate heme b. His-193 contacts a ubiquinone. The next 4 helical transmembrane spans lie at 218–238 (YKDM…MSFM), 280–300 (LGGT…PFTH), 312–332 (LTQI…WTAT), and 339–358 (FITI…IINP).

Belongs to the cytochrome b family. The cytochrome bc1 complex contains 3 respiratory subunits (MT-CYB, CYC1 and UQCRFS1), 2 core proteins (UQCRC1 and UQCRC2) and probably 6 low-molecular weight proteins. The cofactor is heme b.

The protein localises to the mitochondrion inner membrane. Its function is as follows. Component of the ubiquinol-cytochrome c reductase complex (complex III or cytochrome b-c1 complex) that is part of the mitochondrial respiratory chain. The b-c1 complex mediates electron transfer from ubiquinol to cytochrome c. Contributes to the generation of a proton gradient across the mitochondrial membrane that is then used for ATP synthesis. The protein is Cytochrome b (MT-CYB) of Micropechis ikaheca (New Guinean small-eyed snake).